A 131-amino-acid chain; its full sequence is Putative pre-16S rRNA nuclease (131 aa).

The protein belongs to the YqgF nuclease family.

The protein localises to the cytoplasm. Its function is as follows. Could be a nuclease involved in processing of the 5'-end of pre-16S rRNA. This Bordetella petrii (strain ATCC BAA-461 / DSM 12804 / CCUG 43448) protein is Putative pre-16S rRNA nuclease.